The primary structure comprises 117 residues: MAKYSSKINKIRTFALSLVFVGFIIMYIGIFFKESVLLSSLFMILGLLSIGLSTVVYFWIGMLSTKAVRVICPGCDKETKVLGVVDMCMHCREPLTLDKGLEGKEFDESYNKKKMSK.

2 consecutive transmembrane segments (helical) span residues Thr-13 to Lys-33 and Leu-41 to Gly-61.

Belongs to the UPF0295 family.

The protein resides in the cell membrane. This chain is UPF0295 protein YgzB (ygzB), found in Bacillus subtilis (strain 168).